Consider the following 103-residue polypeptide: Large ribosomal subunit protein uL24 (103 aa).

It belongs to the universal ribosomal protein uL24 family. Part of the 50S ribosomal subunit.

Its function is as follows. One of two assembly initiator proteins, it binds directly to the 5'-end of the 23S rRNA, where it nucleates assembly of the 50S subunit. In terms of biological role, one of the proteins that surrounds the polypeptide exit tunnel on the outside of the subunit. This Lachnospira eligens (strain ATCC 27750 / DSM 3376 / VPI C15-48 / C15-B4) (Eubacterium eligens) protein is Large ribosomal subunit protein uL24.